The primary structure comprises 125 residues: uncharacterized protein (125 aa).

2 disordered regions span residues 1–27 (MNKT…GSSS) and 76–125 (NKNN…RFKK). Residues 18-27 (GMNSTTGSSS) show a composition bias toward low complexity.

This is an uncharacterized protein from Dictyostelium discoideum (Social amoeba).